A 541-amino-acid chain; its full sequence is CTP synthase (541 aa).

The amidoligase domain stretch occupies residues 1–271 (MVGKLNPTRF…DTQILKHFDV (271 aa)). CTP is bound at residue serine 19. Serine 19 contributes to the UTP binding site. Residues 20–25 (SLGKGL) and aspartate 77 each bind ATP. Mg(2+) is bound by residues aspartate 77 and glutamate 145. CTP-binding positions include 152 to 154 (DIE), 192 to 197 (KTKPTQ), and lysine 228. UTP contacts are provided by residues 192–197 (KTKPTQ) and lysine 228. The Glutamine amidotransferase type-1 domain occupies 296-537 (VIAIVGKYVT…VTSTLQVKKA (242 aa)). Glycine 355 is an L-glutamine binding site. Cysteine 382 serves as the catalytic Nucleophile; for glutamine hydrolysis. L-glutamine-binding positions include 383 to 386 (LGMQ), glutamate 406, and arginine 465. Residues histidine 510 and glutamate 512 contribute to the active site.

Belongs to the CTP synthase family. In terms of assembly, homotetramer.

The catalysed reaction is UTP + L-glutamine + ATP + H2O = CTP + L-glutamate + ADP + phosphate + 2 H(+). It carries out the reaction L-glutamine + H2O = L-glutamate + NH4(+). It catalyses the reaction UTP + NH4(+) + ATP = CTP + ADP + phosphate + 2 H(+). It functions in the pathway pyrimidine metabolism; CTP biosynthesis via de novo pathway; CTP from UDP: step 2/2. With respect to regulation, allosterically activated by GTP, when glutamine is the substrate; GTP has no effect on the reaction when ammonia is the substrate. The allosteric effector GTP functions by stabilizing the protein conformation that binds the tetrahedral intermediate(s) formed during glutamine hydrolysis. Inhibited by the product CTP, via allosteric rather than competitive inhibition. In terms of biological role, catalyzes the ATP-dependent amination of UTP to CTP with either L-glutamine or ammonia as the source of nitrogen. Regulates intracellular CTP levels through interactions with the four ribonucleotide triphosphates. The polypeptide is CTP synthase (Anaplasma phagocytophilum (strain HZ)).